The sequence spans 205 residues: Protein GrpE (205 aa).

The tract at residues 1-40 (MSRKLHEEELTPEGMDAAQNADPAGDPVSENEGALPAAEP) is disordered.

The protein belongs to the GrpE family. As to quaternary structure, homodimer.

The protein resides in the cytoplasm. In terms of biological role, participates actively in the response to hyperosmotic and heat shock by preventing the aggregation of stress-denatured proteins, in association with DnaK and GrpE. It is the nucleotide exchange factor for DnaK and may function as a thermosensor. Unfolded proteins bind initially to DnaJ; upon interaction with the DnaJ-bound protein, DnaK hydrolyzes its bound ATP, resulting in the formation of a stable complex. GrpE releases ADP from DnaK; ATP binding to DnaK triggers the release of the substrate protein, thus completing the reaction cycle. Several rounds of ATP-dependent interactions between DnaJ, DnaK and GrpE are required for fully efficient folding. This is Protein GrpE from Acidobacterium capsulatum (strain ATCC 51196 / DSM 11244 / BCRC 80197 / JCM 7670 / NBRC 15755 / NCIMB 13165 / 161).